A 1383-amino-acid chain; its full sequence is DNA-directed RNA polymerase subunit beta (1383 aa).

Belongs to the RNA polymerase beta chain family. As to quaternary structure, the RNAP catalytic core consists of 2 alpha, 1 beta, 1 beta' and 1 omega subunit. When a sigma factor is associated with the core the holoenzyme is formed, which can initiate transcription.

It carries out the reaction RNA(n) + a ribonucleoside 5'-triphosphate = RNA(n+1) + diphosphate. Its function is as follows. DNA-dependent RNA polymerase catalyzes the transcription of DNA into RNA using the four ribonucleoside triphosphates as substrates. The sequence is that of DNA-directed RNA polymerase subunit beta from Bartonella tribocorum (strain CIP 105476 / IBS 506).